The primary structure comprises 652 residues: MPIQILPARLANQIAAGEVVERPASVVKELVENSIDAGATRIDIDIEKGGSKLIRIRDNGSGIPKEELTLALSRHATSKITTLDDLEAIVSLGFRGEALASISSVSRLTLTSRTVAQEEAWSAHAEGRDMEVKLKPAAHPVGTTIDVVDLFFNTPARRKFLRTDKTEFTHIDELLKRIALSRLDITINLRHNGKSVRQYRAAQTKMQVEKRLAAVCGASFLQHALEVELEHGDLIFHGWISSPEGARAQGDVQYCYVNGRMMKDKLINHAIRQGYESSLSTNQYAAYILFIEINPHDVDVNVHPAKHEVRFHQARLVHDFIYQAIYGALQQAASLPEVTTTSDIEMDRESYFPPMKDYVRQSSLPLTDAHIENKSKQLKEAIEATPSYPNKASSDEWVSKAKPSMPKAYQSEKPSQRELNNYQHLLTTRDREDKTSNFEVNEVRIPKISEAKHNTVVVPQLKSAVSTSMLLGKVLSVVDKVFGLLQLGNQLQLVDLRYAEFIKSYGQLNSAHHEVLKAQPLLIPLSIGIDKDICNKLTEYQGILKQLGIDLKVKNNESLIVMAVCQPIRQQNLQQLIPNLLRYIYQINPSLDQVISWLSHQVQHDEACYSSAQAIQLVMELEQLWGNELSQFNNKLLKNIDITQAIQAFSHE.

The protein belongs to the DNA mismatch repair MutL/HexB family.

In terms of biological role, this protein is involved in the repair of mismatches in DNA. It is required for dam-dependent methyl-directed DNA mismatch repair. May act as a 'molecular matchmaker', a protein that promotes the formation of a stable complex between two or more DNA-binding proteins in an ATP-dependent manner without itself being part of a final effector complex. In Aliivibrio salmonicida (strain LFI1238) (Vibrio salmonicida (strain LFI1238)), this protein is DNA mismatch repair protein MutL.